The following is a 259-amino-acid chain: Insulin-induced gene 1 protein (259 aa).

The Cytoplasmic portion of the chain corresponds to 1 to 66 (MPRLHDHVWN…ARPGSWHHDL (66 aa)). The tract at residues 36–55 (PGVPEPEHAPRGQRAGTTGC) is disordered. Residues 67–89 (VQRSLVLFSFGVVLALVLNLLQI) traverse the membrane as a helical segment. Topologically, residues 90–108 (QRNVTLFPDEVIATIFSSA) are extracellular. A helical transmembrane segment spans residues 109 to 126 (WWVPPCCGTAAAVVGLLY). The Cytoplasmic portion of the chain corresponds to 127 to 141 (PCIDSHLGEPHKFKR). Residues lysine 138 and lysine 140 each participate in a glycyl lysine isopeptide (Lys-Gly) (interchain with G-Cter in ubiquitin) cross-link. The helical transmembrane segment at 142–164 (EWASVMRCIAVFVGINHASAKLD) threads the bilayer. At 165 to 167 (FAN) the chain is on the extracellular side. The chain crosses the membrane as a helical span at residues 168-186 (NVQLSLTLAALSLGLWWTF). At 187–191 (DRSRS) the chain is on the cytoplasmic side. Position 189 is a phosphoserine (serine 189). A helical transmembrane segment spans residues 192–213 (GLGLGITIAFLATLITQFLVYN). At 214–227 (GVYQYTSPDFLYIR) the chain is on the extracellular side. Residues 228-245 (SWLPCIFFSGGVTVGNIG) traverse the membrane as a helical segment. At 246-259 (RQLAMGVPEKPHSD) the chain is on the cytoplasmic side. Positions 253 to 259 (PEKPHSD) match the KxHxx motif.

Belongs to the INSIG family. In terms of assembly, interacts with SCAP; interaction is direct and only takes place in the presence of sterols; it prevents interaction between SCAP and the coat protein complex II (COPII). Associates with the SCAP-SREBP complex (composed of SCAP and SREBF1/SREBP1 or SREBF2/SREBP2); association is mediated via its interaction with SCAP and only takes place in the presence of sterols. Interaction with SCAP is mutually exclusive with PAQR3. Interacts with HMGCR (via its SSD); the interaction, accelerated by sterols, leads to the recruitment of HMGCR to AMFR/gp78 for its ubiquitination by the sterol-mediated ERAD pathway. Interacts with AMFR/gp78 (via its membrane domain); the interaction recruits HMCR at the ER membrane for its ubiquitination and degradation by the sterol-mediated ERAD pathway. Interacts with SOAT2/ACAT2; leading to promote recruitment of AMFR/gp78 and subsequent ubiquitination of SOAT2/ACAT2. Interacts with RNF139. Interacts with RNF145. In terms of processing, phosphorylation at Ser-189 by PCK1 reduces binding to oxysterol, disrupting the interaction between INSIG1 and SCAP, thereby promoting nuclear translocation of SREBP proteins (SREBF1/SREBP1 or SREBF2/SREBP2) and subsequent transcription of downstream lipogenesis-related genes. Ubiquitinated by AMFR/gp78 in response to sterol deprivation, leading to its degradation: when the SCAP-SREBP complex becomes dissociated from INSIG1, INSIG1 is then ubiquitinated and degraded in proteasomes. Although ubiquitination is required for rapid INSIG1 degradation, it is not required for release of the SCAP-SREBP complex. Ubiquitinated by RNF139.

The protein localises to the endoplasmic reticulum membrane. In terms of biological role, oxysterol-binding protein that mediates feedback control of cholesterol synthesis by controlling both endoplasmic reticulum to Golgi transport of SCAP and degradation of HMGCR. Acts as a negative regulator of cholesterol biosynthesis by mediating the retention of the SCAP-SREBP complex in the endoplasmic reticulum, thereby blocking the processing of sterol regulatory element-binding proteins (SREBPs) SREBF1/SREBP1 and SREBF2/SREBP2. Binds oxysterol, including 25-hydroxycholesterol, regulating interaction with SCAP and retention of the SCAP-SREBP complex in the endoplasmic reticulum. In presence of oxysterol, interacts with SCAP, retaining the SCAP-SREBP complex in the endoplasmic reticulum, thereby preventing SCAP from escorting SREBF1/SREBP1 and SREBF2/SREBP2 to the Golgi. Sterol deprivation or phosphorylation by PCK1 reduce oxysterol-binding, disrupting the interaction between INSIG1 and SCAP, thereby promoting Golgi transport of the SCAP-SREBP complex, followed by processing and nuclear translocation of SREBF1/SREBP1 and SREBF2/SREBP2. Also regulates cholesterol synthesis by regulating degradation of HMGCR: initiates the sterol-mediated ubiquitin-mediated endoplasmic reticulum-associated degradation (ERAD) of HMGCR via recruitment of the reductase to the ubiquitin ligases AMFR/gp78 and/or RNF139. Also regulates degradation of SOAT2/ACAT2 when the lipid levels are low: initiates the ubiquitin-mediated degradation of SOAT2/ACAT2 via recruitment of the ubiquitin ligases AMFR/gp78. The sequence is that of Insulin-induced gene 1 protein from Mus musculus (Mouse).